Reading from the N-terminus, the 78-residue chain is Large ribosomal subunit protein bL28 (78 aa).

Residues 1-28 form a disordered region; the sequence is MSAYCQVTGRKPGFGKQVSHSHRHTSRR.

Belongs to the bacterial ribosomal protein bL28 family.

This chain is Large ribosomal subunit protein bL28, found in Corynebacterium urealyticum (strain ATCC 43042 / DSM 7109).